Reading from the N-terminus, the 195-residue chain is Probable nicotinate-nucleotide adenylyltransferase (195 aa).

It belongs to the NadD family.

It catalyses the reaction nicotinate beta-D-ribonucleotide + ATP + H(+) = deamido-NAD(+) + diphosphate. It participates in cofactor biosynthesis; NAD(+) biosynthesis; deamido-NAD(+) from nicotinate D-ribonucleotide: step 1/1. Its function is as follows. Catalyzes the reversible adenylation of nicotinate mononucleotide (NaMN) to nicotinic acid adenine dinucleotide (NaAD). The protein is Probable nicotinate-nucleotide adenylyltransferase of Salinibacter ruber (strain DSM 13855 / M31).